The chain runs to 206 residues: Large ribosomal subunit protein uL4 (206 aa).

The tract at residues 63–97 is disordered; that stretch reads MYKQKGTGRARHHSARAPQFRGGGKAHGPVVRSHE. The segment covering 64–77 has biased composition (basic residues); sequence YKQKGTGRARHHSA.

This sequence belongs to the universal ribosomal protein uL4 family. Part of the 50S ribosomal subunit.

Functionally, one of the primary rRNA binding proteins, this protein initially binds near the 5'-end of the 23S rRNA. It is important during the early stages of 50S assembly. It makes multiple contacts with different domains of the 23S rRNA in the assembled 50S subunit and ribosome. Forms part of the polypeptide exit tunnel. The protein is Large ribosomal subunit protein uL4 of Rhizobium rhizogenes (strain K84 / ATCC BAA-868) (Agrobacterium radiobacter).